Consider the following 355-residue polypeptide: Protein ATP1B4 (355 aa).

Topologically, residues 1-108 are nuclear; it reads MRRQLRSRRA…SLARTGQSWS (108 aa). Residues 33–77 form a disordered region; the sequence is ADEEEEAEEEARVMVVPDLEEEEEEEEEKEEEEKEEEDSHSQETD. Residues 50–68 are compositionally biased toward acidic residues; the sequence is DLEEEEEEEEEKEEEEKEE. Residues 109-129 form a helical; Signal-anchor for type II membrane protein membrane-spanning segment; it reads LILVIYFFFYASLAAVITLCM. Residues 130–355 are Perinuclear space-facing; the sequence is YTLFLTISPY…RVIFTLNIET (226 aa).

Belongs to the X(+)/potassium ATPases subunit beta family. In terms of assembly, associates with a SMAD7-transcriptional complex. Interacts with SNW1 and TOR1AIP1. Does not associate with known Na,K-ATPase alpha-subunits.

The protein resides in the nucleus inner membrane. In terms of biological role, may act as a transcriptional coregulator during muscle development through its interaction with SNW1. Has lost its ancestral function as a Na,K-ATPase beta-subunit. In Bos taurus (Bovine), this protein is Protein ATP1B4 (ATP1B4).